Here is a 172-residue protein sequence, read N- to C-terminus: Small ribosomal subunit protein uS5 (172 aa).

One can recognise an S5 DRBM domain in the interval 17–80 (LREKMIAVNR…DEARRKMIKV (64 aa)).

Belongs to the universal ribosomal protein uS5 family. In terms of assembly, part of the 30S ribosomal subunit. Contacts proteins S4 and S8.

Functionally, with S4 and S12 plays an important role in translational accuracy. In terms of biological role, located at the back of the 30S subunit body where it stabilizes the conformation of the head with respect to the body. This is Small ribosomal subunit protein uS5 from Polynucleobacter asymbioticus (strain DSM 18221 / CIP 109841 / QLW-P1DMWA-1) (Polynucleobacter necessarius subsp. asymbioticus).